A 55-amino-acid chain; its full sequence is Ferredoxin (55 aa).

4Fe-4S ferredoxin-type domains are found at residues 2–26 and 27–55; these read YKITDECIACGSCADQCPVEAISEG and SIYEIDEALCTDCGACADQCPVEAIVPED. Residues cysteine 8, cysteine 11, cysteine 14, cysteine 18, cysteine 36, cysteine 39, cysteine 42, and cysteine 46 each contribute to the [4Fe-4S] cluster site.

It depends on [4Fe-4S] cluster as a cofactor.

In terms of biological role, ferredoxins are iron-sulfur proteins that transfer electrons in a wide variety of metabolic reactions. The chain is Ferredoxin from Butyribacterium methylotrophicum.